Consider the following 220-residue polypeptide: MFELRKLPYDTNAFGDFLSAETFSYHHGKHHNTYVTNLNNLIKYTEFASKDLVSIIKSSSGGVFNNAAQVYNHDFYFDCIKPITGCGCGGSCQSMDANLQAALEKEFGSLENFKAEFIKGATGVFGSGWFWLVYNTKNQKLEFVGTSNAATPITEDKVPLLVVDVWEHAYYVDHRNARPAYLEKFYAHINWEFVAKAYEWALKEGMGSVSFYANELHPVK.

Fe cation is bound by residues His26, His73, Asp164, and His168.

This sequence belongs to the iron/manganese superoxide dismutase family. As to quaternary structure, homodimer. It depends on Fe cation as a cofactor.

It carries out the reaction 2 superoxide + 2 H(+) = H2O2 + O2. Functionally, destroys superoxide anion radicals which are normally produced within the cells and which are toxic to biological systems. This Campylobacter coli protein is Superoxide dismutase [Fe] (sodB).